The primary structure comprises 63 residues: UPF0337 protein PSPTO_1596 (63 aa).

The segment at 20–63 (KQAVGKATDNTKLQAEGKAQELKGEGQQAKGEVKDAVKKGVDKV) is disordered. A compositionally biased stretch (basic and acidic residues) spans 50–63 (GEVKDAVKKGVDKV).

Belongs to the UPF0337 (CsbD) family.

The chain is UPF0337 protein PSPTO_1596 from Pseudomonas syringae pv. tomato (strain ATCC BAA-871 / DC3000).